Reading from the N-terminus, the 137-residue chain is Large ribosomal subunit protein uL16 (137 aa).

The span at 1–17 shows a compositional bias: basic residues; it reads MLSPKRVKFRKRQRGRL. Positions 1-24 are disordered; that stretch reads MLSPKRVKFRKRQRGRLKGTDERG.

Belongs to the universal ribosomal protein uL16 family. As to quaternary structure, part of the 50S ribosomal subunit.

Binds 23S rRNA and is also seen to make contacts with the A and possibly P site tRNAs. This Leptospira borgpetersenii serovar Hardjo-bovis (strain JB197) protein is Large ribosomal subunit protein uL16.